Reading from the N-terminus, the 72-residue chain is NAD(P)H-quinone oxidoreductase subunit O (72 aa).

Belongs to the complex I NdhO subunit family. In terms of assembly, NDH-1 can be composed of about 15 different subunits; different subcomplexes with different compositions have been identified which probably have different functions.

The protein localises to the cellular thylakoid membrane. The enzyme catalyses a plastoquinone + NADH + (n+1) H(+)(in) = a plastoquinol + NAD(+) + n H(+)(out). The catalysed reaction is a plastoquinone + NADPH + (n+1) H(+)(in) = a plastoquinol + NADP(+) + n H(+)(out). In terms of biological role, NDH-1 shuttles electrons from an unknown electron donor, via FMN and iron-sulfur (Fe-S) centers, to quinones in the respiratory and/or the photosynthetic chain. The immediate electron acceptor for the enzyme in this species is believed to be plastoquinone. Couples the redox reaction to proton translocation, and thus conserves the redox energy in a proton gradient. Cyanobacterial NDH-1 also plays a role in inorganic carbon-concentration. This Trichodesmium erythraeum (strain IMS101) protein is NAD(P)H-quinone oxidoreductase subunit O.